The primary structure comprises 208 residues: NAD(P)H-quinone oxidoreductase subunit I (208 aa).

2 consecutive 4Fe-4S ferredoxin-type domains span residues 55–84 (GRIH…VDWV) and 95–124 (RNYS…MTEE). The [4Fe-4S] cluster site is built by cysteine 64, cysteine 67, cysteine 70, cysteine 74, cysteine 104, cysteine 107, cysteine 110, and cysteine 114.

The protein belongs to the complex I 23 kDa subunit family. As to quaternary structure, NDH-1 is composed of at least 11 different subunits. [4Fe-4S] cluster serves as cofactor.

Its subcellular location is the cellular thylakoid membrane. It carries out the reaction a plastoquinone + NADH + (n+1) H(+)(in) = a plastoquinol + NAD(+) + n H(+)(out). The enzyme catalyses a plastoquinone + NADPH + (n+1) H(+)(in) = a plastoquinol + NADP(+) + n H(+)(out). In terms of biological role, NDH-1 shuttles electrons from an unknown electron donor, via FMN and iron-sulfur (Fe-S) centers, to quinones in the respiratory and/or the photosynthetic chain. The immediate electron acceptor for the enzyme in this species is believed to be plastoquinone. Couples the redox reaction to proton translocation, and thus conserves the redox energy in a proton gradient. The protein is NAD(P)H-quinone oxidoreductase subunit I of Prochlorococcus marinus (strain MIT 9215).